The primary structure comprises 187 residues: uncharacterized protein (187 aa).

A helical membrane pass occupies residues 3-23; that stretch reads AIIIFLILFIVGVLIGVGVYY.

The protein resides in the membrane. This is an uncharacterized protein from Methanocaldococcus jannaschii (strain ATCC 43067 / DSM 2661 / JAL-1 / JCM 10045 / NBRC 100440) (Methanococcus jannaschii).